Here is a 225-residue protein sequence, read N- to C-terminus: Methylthioribulose-1-phosphate dehydratase (225 aa).

Positions 106 and 108 each coordinate Zn(2+).

Belongs to the aldolase class II family. MtnB subfamily. Zn(2+) serves as cofactor.

The catalysed reaction is 5-(methylsulfanyl)-D-ribulose 1-phosphate = 5-methylsulfanyl-2,3-dioxopentyl phosphate + H2O. It functions in the pathway amino-acid biosynthesis; L-methionine biosynthesis via salvage pathway; L-methionine from S-methyl-5-thio-alpha-D-ribose 1-phosphate: step 2/6. Catalyzes the dehydration of methylthioribulose-1-phosphate (MTRu-1-P) into 2,3-diketo-5-methylthiopentyl-1-phosphate (DK-MTP-1-P). In Xanthomonas oryzae pv. oryzae (strain PXO99A), this protein is Methylthioribulose-1-phosphate dehydratase.